A 1346-amino-acid chain; its full sequence is Pikromycin polyketide synthase component PikAIV (1346 aa).

Positions 3–32 (SSNEQLVDALRASLKENEELRKESRRRADR) form a coiled coil. One can recognise a Ketosynthase family 3 (KS3) domain in the interval 34–461 (QEPMAIVGMS…GTNAHVVLEE (428 aa)). The tract at residues 37 to 1332 (MAIVGMSCRF…HAPAVAEAVL (1296 aa)) is module 6. Catalysis depends on for beta-ketoacyl synthase activity residues Cys207, His342, and His382. The segment at 562–844 (FVFPGQGTQW…VLTMTLPDKV (283 aa)) is acyltransferase. Catalysis depends on Ser652, which acts as the Acyl-ester intermediate; for acyltransferase activity. In terms of domain architecture, Carrier spans 945–1020 (SAVLAMVMRQ…ALAERISDEL (76 aa)). Ser980 is subject to O-(pantetheine 4'-phosphoryl)serine. A disordered region spans residues 1028–1050 (AEPSDHEQAEEEKAAAPAGARSG). Residues 1030–1041 (PSDHEQAEEEKA) show a composition bias toward basic and acidic residues. Residue Thr1125 participates in substrate binding. The thioesterase stretch occupies residues 1127–1332 (ANGGPHEFLR…HAPAVAEAVL (206 aa)). Ser1196 serves as the catalytic Nucleophile; for thioesterase activity. Substrate-binding residues include Gly1197 and Asp1224. The active-site Proton acceptor; for thioesterase activity is His1316.

In terms of assembly, homodimer. Pikromycin PKS consists of a combination of multimodular (PikAI and PikAII) and monomodular (PikAIII and PikAIV) polypeptides each coding for a functional synthase subunit which participates in 1 (monomodular) or 2 (multimodular) of the six FAS-like elongation steps required for formation of the polyketide. Module 1, 2, 3, 4, 5, and 6 participating in biosynthesis steps 1, 2, 3, 4, 5, and 6, respectively. Pantetheine 4'-phosphate serves as cofactor.

It catalyses the reaction 5 (S)-methylmalonyl-CoA + malonyl-CoA + 5 NADPH + 11 H(+) = 10-deoxymethynolide + 6 CO2 + 5 NADP(+) + 6 CoA + 2 H2O. The enzyme catalyses 6 (S)-methylmalonyl-CoA + malonyl-CoA + 5 NADPH + 12 H(+) = narbonolide + 7 CO2 + 5 NADP(+) + 7 CoA + 2 H2O. It functions in the pathway antibiotic biosynthesis. Irreversibly inhibited by (2S,3R,4S)-2,4-dihydroxy-3-methylhexyl-phosphonic acid and (3R,4S)-4-hydroxy-3-methyl-2-oxohexyl-phosphonic acid. Its function is as follows. Involved in the biosynthesis of 12- and 14-membered ring macrolactone antibiotics such as methymycin and neomethymycin, and pikromycin and narbomycin, respectively. Component of the pikromycin PKS which catalyzes the biosynthesis of both precursors 10-deoxymethynolide (12-membered ring macrolactone) and narbonolide (14-membered ring macrolactone). Chain elongation through PikAI, PikAII and PikAIII followed by thioesterase catalyzed termination results in the production of 10-deoxymethynolide, while continued elongation through PikAIV, followed by thioesterase (TE) catalyzed cyclization results in the biosynthesis of the narbonolide. The thioesterase can use a series of diketide-N-acetylcysteamine (SNAC) thioesters, but has a strong preference for the 2-methyl-3-ketopentanoyl-SNAC over the stereoisomers of 2-methyl-3-hydroxyacyl-SNAC. This chain is Pikromycin polyketide synthase component PikAIV, found in Streptomyces venezuelae.